The sequence spans 956 residues: UvrABC system protein A (956 aa).

33–40 (GLSGSGKS) serves as a coordination point for ATP. The segment at 252-279 (CPYCGFSVGELEPRMFSFNSPFGACPTC) adopts a C4-type zinc-finger fold. 2 ABC transporter domains span residues 309–587 (WRPI…KNSI) and 607–936 (GNGL…KYLK). 639 to 646 (GVSGSGKS) contributes to the ATP binding site. The segment at 738–764 (CEACKGDGIIKIEMHFLPDVYVPCEVC) adopts a C4-type zinc-finger fold.

The protein belongs to the ABC transporter superfamily. UvrA family. In terms of assembly, forms a heterotetramer with UvrB during the search for lesions.

It localises to the cytoplasm. The UvrABC repair system catalyzes the recognition and processing of DNA lesions. UvrA is an ATPase and a DNA-binding protein. A damage recognition complex composed of 2 UvrA and 2 UvrB subunits scans DNA for abnormalities. When the presence of a lesion has been verified by UvrB, the UvrA molecules dissociate. This is UvrABC system protein A from Listeria monocytogenes serovar 1/2a (strain ATCC BAA-679 / EGD-e).